The chain runs to 415 residues: Beta-2 adrenergic receptor (415 aa).

The Extracellular portion of the chain corresponds to 1 to 34 (MGQPANRSVFLLAPNGSHAPDQGDSQERSEAWVV). Residues N6 and N15 are each glycosylated (N-linked (GlcNAc...) asparagine). Residues 35–58 (GMGIVMSLIVLAIVFGNVLVITAI) traverse the membrane as a helical segment. The Cytoplasmic segment spans residues 59-71 (ARFERLQTVTNYF). Residues 72-95 (ITSLACADLVMGLAVVPFGASHIL) traverse the membrane as a helical segment. Residues 96-106 (MKMWTFGNFWC) lie on the Extracellular side of the membrane. Disulfide bonds link C106-C191 and C184-C190. The chain crosses the membrane as a helical span at residues 107 to 129 (EFWTSIDVLCVTASIETLCVIAV). Over 130–150 (DRYFAITSPFKYQSLLTKNKA) the chain is Cytoplasmic. Y141 carries the phosphotyrosine modification. A helical transmembrane segment spans residues 151 to 174 (RVVILMVWIVSGLTSFLPIQMHWY). The Extracellular portion of the chain corresponds to 175-196 (RATHQEAINCYAKETCCDFFTN). Residues 197–220 (QAYAIASSIVSFYLPLVVMVFVYS) form a helical membrane-spanning segment. At 221 to 274 (RVFQVAQRQLQKIDRSEGRFHAQNLSQVEQDGRSGHGHRRSSKFCLKEHKALKT) the chain is on the cytoplasmic side. A Phosphoserine modification is found at S246. Phosphoserine; by PKA is present on residues S261 and S262. C265 is lipidated: S-palmitoyl cysteine. A helical transmembrane segment spans residues 275–298 (LGIIMGTFTLCWLPFFIVNIVHVI). Topologically, residues 299–305 (QDNLIPK) are extracellular. A helical membrane pass occupies residues 306 to 329 (EVYILLNWVGYVNSAFNPLIYCRS). Residues 330–415 (PDFRIAFQEL…RNCSTNDSLL (86 aa)) lie on the Cytoplasmic side of the membrane. C341 carries the S-palmitoyl cysteine lipid modification. 2 positions are modified to phosphoserine; by PKA: S345 and S346. At S355 the chain carries Phosphoserine; by BARK. Residues 379–415 (SELLCEDPPGTEDRQGTVPSDSVDSQGRNCSTNDSLL) form a disordered region. Residues P387 and P397 each carry the 4-hydroxyproline modification. Polar residues predominate over residues 395–415 (TVPSDSVDSQGRNCSTNDSLL). The short motif at 412–415 (DSLL) is the PDZ-binding element.

The protein belongs to the G-protein coupled receptor 1 family. Adrenergic receptor subfamily. ADRB2 sub-subfamily. In terms of assembly, binds NHERF1 and GPRASP1. Interacts with ARRB1 and ARRB2. Interacts with SRC. Interacts with USP20 and USP33. Interacts with VHL; the interaction, which is increased on hydroxylation of ADRB2, ubiquitinates ADRB2 leading to its degradation. Interacts with EGLN3; the interaction hydroxylates ADRB2 facilitating VHL-E3 ligase-mediated ubiquitination. Interacts (via PDZ-binding motif) with SNX27 (via PDZ domain); the interaction is required when endocytosed to prevent degradation in lysosomes and promote recycling to the plasma membrane. Interacts with CNIH4. Interacts with ARRDC3. Interacts with NEDD4. Interacts with MARCHF2. Post-translationally, palmitoylated; may reduce accessibility of Ser-345 and Ser-346 by anchoring Cys-341 to the plasma membrane. Agonist stimulation promotes depalmitoylation and further allows Ser-345 and Ser-346 phosphorylation. In terms of processing, phosphorylated by PKA and BARK upon agonist stimulation, which mediates homologous desensitization of the receptor. PKA-mediated phosphorylation seems to facilitate phosphorylation by BARK. Phosphorylation of Tyr-141 is induced by insulin and leads to supersensitization of the receptor. Post-translationally, polyubiquitinated. Agonist-induced ubiquitination leads to sort internalized receptors to the lysosomes for degradation. Deubiquitination by USP20 and USP33, leads to ADRB2 recycling and resensitization after prolonged agonist stimulation. USP20 and USP33 are constitutively associated and are dissociated immediately after agonist stimulation. Ubiquitination by the VHL-E3 ligase complex is oxygen-dependent. In terms of processing, hydroxylation by EGLN3 occurs only under normoxia and increases the interaction with VHL and the subsequent ubiquitination and degradation of ADRB2. Palmitoylated. Mainly palmitoylated at Cys-341. Palmitoylation may reduce accessibility of phosphorylation sites by anchoring the receptor to the plasma membrane. Agonist stimulation promotes depalmitoylation and further allows Ser-345 and Ser-346 phosphorylation. Also undergoes transient, ligand-induced palmitoylation at Cys-265 probably by ZDHHC9, ZDHHC14 and ZDHHC18 within the Golgi. Palmitoylation at Cys-265 requires phosphorylation by PKA and receptor internalization and stabilizes the receptor. Could be depalmitoylated by LYPLA1 at the plasma membrane.

It localises to the cell membrane. The protein localises to the early endosome. The protein resides in the golgi apparatus. Functionally, beta-adrenergic receptors mediate the catecholamine-induced activation of adenylate cyclase through the action of G proteins. The beta-2-adrenergic receptor binds epinephrine with an approximately 30-fold greater affinity than it does norepinephrine. The sequence is that of Beta-2 adrenergic receptor (ADRB2) from Canis lupus familiaris (Dog).